The sequence spans 267 residues: Phosphate import ATP-binding protein PstB 2 (267 aa).

The ABC transporter domain maps to 21–262; the sequence is LATKDLHVYY…AQCQSTNDYV (242 aa). 53–60 is a binding site for ATP; the sequence is GPSGCGKS.

Belongs to the ABC transporter superfamily. Phosphate importer (TC 3.A.1.7) family. As to quaternary structure, the complex is composed of two ATP-binding proteins (PstB), two transmembrane proteins (PstC and PstA) and a solute-binding protein (PstS).

The protein localises to the cell membrane. It catalyses the reaction phosphate(out) + ATP + H2O = ADP + 2 phosphate(in) + H(+). Part of the ABC transporter complex PstSACB involved in phosphate import. Responsible for energy coupling to the transport system. In Streptococcus pyogenes serotype M1, this protein is Phosphate import ATP-binding protein PstB 2.